The following is a 423-amino-acid chain: Serine hydroxymethyltransferase (423 aa).

(6S)-5,6,7,8-tetrahydrofolate is bound by residues Leu-121 and 125-127 (GHL). Lys-230 carries the post-translational modification N6-(pyridoxal phosphate)lysine. Residue 355–357 (SPF) coordinates (6S)-5,6,7,8-tetrahydrofolate.

Belongs to the SHMT family. Homodimer. Requires pyridoxal 5'-phosphate as cofactor.

It is found in the cytoplasm. The enzyme catalyses (6R)-5,10-methylene-5,6,7,8-tetrahydrofolate + glycine + H2O = (6S)-5,6,7,8-tetrahydrofolate + L-serine. Its pathway is one-carbon metabolism; tetrahydrofolate interconversion. The protein operates within amino-acid biosynthesis; glycine biosynthesis; glycine from L-serine: step 1/1. Functionally, catalyzes the reversible interconversion of serine and glycine with tetrahydrofolate (THF) serving as the one-carbon carrier. This reaction serves as the major source of one-carbon groups required for the biosynthesis of purines, thymidylate, methionine, and other important biomolecules. Also exhibits THF-independent aldolase activity toward beta-hydroxyamino acids, producing glycine and aldehydes, via a retro-aldol mechanism. This is Serine hydroxymethyltransferase from Hydrogenovibrio crunogenus (strain DSM 25203 / XCL-2) (Thiomicrospira crunogena).